Reading from the N-terminus, the 384-residue chain is Spermidine/putrescine import ATP-binding protein PotA (384 aa).

In terms of domain architecture, ABC transporter spans 6-238; it reads IAFQNVSKVF…PINHFVATFI (233 aa). 40–47 contributes to the ATP binding site; sequence GASGSGKS.

It belongs to the ABC transporter superfamily. Spermidine/putrescine importer (TC 3.A.1.11.1) family. In terms of assembly, the complex is composed of two ATP-binding proteins (PotA), two transmembrane proteins (PotB and PotC) and a solute-binding protein (PotD).

It is found in the cell membrane. It catalyses the reaction ATP + H2O + polyamine-[polyamine-binding protein]Side 1 = ADP + phosphate + polyamineSide 2 + [polyamine-binding protein]Side 1.. Functionally, part of the ABC transporter complex PotABCD involved in spermidine/putrescine import. Responsible for energy coupling to the transport system. This is Spermidine/putrescine import ATP-binding protein PotA from Streptococcus thermophilus (strain ATCC BAA-250 / LMG 18311).